We begin with the raw amino-acid sequence, 40 residues long: 67 kDa serum albumin (40 aa).

In terms of domain architecture, Albumin spans 1-40; it reads DAEHKSEIVHRFNDLKEEKFKGAALITFAQFLHKKPEEEA. His-4 provides a ligand contact to Cu cation.

The protein belongs to the ALB/AFP/VDB family. Plasma.

The protein localises to the secreted. Serum albumin, the main protein of plasma, has a good binding capacity for water, Ca(2+), Na(+), K(+), fatty acids, hormones, bilirubin and drugs. Its main function is the regulation of the colloidal osmotic pressure of blood. This chain is 67 kDa serum albumin, found in Trachemys scripta (Red-eared slider turtle).